A 458-amino-acid polypeptide reads, in one-letter code: MAALSKSIPHNCYEIGHTWHPSCRVSFLQITWGALEESLRIYAPLYLIAAVLRKRKLEYYLYKLLPEILQSASFLTANGALYITFFCILRKILGKFYSWTPGFGAALPASYVAILIERKSRRGLLTIYMANLATETLFRMGVARGTITTLRNGEVLLFCITAAMYMFFFRCKDGLKGFTFSALRFIVGKEEIPTHSYSPETAYAKVEQKREKHKGTPRAMSIIALVRTLVDSVCKHGPRHRCCKHYEDNCISYCIKGFIRMFSVGYLIQCCLRIPSAFRHLFTEPSRLLSLFYNKENFQLGAFLGSFVSIYKGTSCFLRWIRNLDDELHAIVAGFLAGVSMMFYKSTTISMYLASKLVETMYFKGIEAGKVPYFPQADTIIYSISTAICFHAAVMEVQNLRPSYWKFLLRLTKGRFALMNRKALDVFGTGASREFHNFIPRLDPRYTVVTPELPIDFS.

Transmembrane regions (helical) follow at residues 68–88 (ILQS…FFCI), 96–116 (FYSW…AILI), 149–169 (TLRN…MFFF), 298–318 (FQLG…SCFL), 331–351 (IVAG…TISM), and 377–397 (ADTI…VMEV).

This sequence belongs to the TMEM135 family.

The protein localises to the mitochondrion membrane. It localises to the peroxisome membrane. Involved in mitochondrial metabolism by regulating the balance between mitochondrial fusion and fission. May act as a regulator of mitochondrial fission that promotes DNM1L-dependent fission through activation of DNM1L. May be involved in peroxisome organization. This is Transmembrane protein 135 from Mus musculus (Mouse).